The primary structure comprises 384 residues: Monomeric sarcosine oxidase (384 aa).

6–36 (DVIVIGLGGMGSAAAHHLSARGARVLGLEKF) serves as a coordination point for FAD. Cysteine 315 bears the S-8alpha-FAD cysteine mark.

Belongs to the MSOX/MTOX family. MSOX subfamily. As to quaternary structure, monomer. FAD is required as a cofactor.

The protein localises to the cytoplasm. The catalysed reaction is sarcosine + O2 + H2O = formaldehyde + glycine + H2O2. Functionally, catalyzes the oxidative demethylation of sarcosine. The chain is Monomeric sarcosine oxidase from Streptomyces avermitilis (strain ATCC 31267 / DSM 46492 / JCM 5070 / NBRC 14893 / NCIMB 12804 / NRRL 8165 / MA-4680).